The sequence spans 340 residues: MLDPLKVDSYDYHLPPHLIAKEPVQPADRAKLLIYDRKTDTITHTIFKNLPQFLPQKTHIVFNDTKVIKARIFGHKSSGGKIELLINRPLENERFNVFIRGKVKVGTTLHFSQGLQAIVEELIEDGTRIVTFYHDEKRLSFHELLPILDTIGSIPLPPYIDRAAKKEDETNYQPIFAKKAGAVAAPTASLHFTEQMLNSMAKEFPFHFVTLHVGAGTFKPVEANLITEHAMHSEYYEIPKDTIEVIESDEKVLAVGTTVTRTIEYYVRTKKSFGECDLFLNPLNPPKRVDHLLTNFHLPKSTLIMLVASFIGLETTKRVYQEAIEKEYRFYSYGDAMLIL.

It belongs to the QueA family. As to quaternary structure, monomer.

It localises to the cytoplasm. The enzyme catalyses 7-aminomethyl-7-carbaguanosine(34) in tRNA + S-adenosyl-L-methionine = epoxyqueuosine(34) in tRNA + adenine + L-methionine + 2 H(+). The protein operates within tRNA modification; tRNA-queuosine biosynthesis. In terms of biological role, transfers and isomerizes the ribose moiety from AdoMet to the 7-aminomethyl group of 7-deazaguanine (preQ1-tRNA) to give epoxyqueuosine (oQ-tRNA). This is S-adenosylmethionine:tRNA ribosyltransferase-isomerase from Nitratiruptor sp. (strain SB155-2).